The sequence spans 452 residues: Lamina-associated polypeptide 2, isoform beta (452 aa).

A nucleoplasmic region spans residues 1–409 (MPEFLEDPSV…KSEKTKKGRS (409 aa)). The region spanning 5–48 (LEDPSVLTKDKLKSELVANNVTLPAGEQRKDVYVQLYLQHLTAR) is the LEM-like domain. Disordered stretches follow at residues 48–113 (RNRP…DVTE) and 149–264 (REQG…VEPS). The interval 49–107 (NRPPLAAGANSKGPPDFSSDEEREPTPVLGSGASVGRGRGAVGRKATKKTDKPRPEDKD) is linker. A phosphoserine mark is found at Ser-66 and Ser-67. Position 74 is a phosphothreonine (Thr-74). Phosphoserine is present on Ser-82. An omega-N-methylarginine mark is found at Arg-85 and Arg-87. A compositionally biased stretch (basic and acidic residues) spans 96–105 (KKTDKPRPED). An LEM domain is found at 108-152 (DLDVTELSNEELLEQLVRYGVNPGPIVGTTRKLYEKKLLKLREQG). The tract at residues 137 to 242 (TRKLYEKKLL…TSGSSKGGPL (106 aa)) is NAKAP95-binding N. Residues 154-177 (ESRSSTPLPTVSSSAENTRQNGSN) are compositionally biased toward polar residues. Residues Ser-155 and Ser-158 each carry the phosphoserine modification. Position 159 is a phosphothreonine (Thr-159). Phosphoserine is present on residues Ser-165, Ser-167, Ser-176, Ser-179, and Ser-183. Over residues 178 to 202 (DSDRYSDNDEDSKIELKLEKREPLK) the composition is skewed to basic and acidic residues. At Lys-206 the chain carries N6-acetyllysine. Positions 298–370 (TGNFKHASSI…SCRRPIKGAA (73 aa)) are binds lamins B. The tract at residues 299–373 (GNFKHASSIL…RPIKGAAGRP (75 aa)) is NAKAP95-binding C. 3 positions are modified to phosphoserine: Ser-305, Ser-306, and Ser-361. An N6-acetyllysine modification is found at Lys-388. Residues 410–430 (VPMWIKMLLFALVAGFLFLVY) traverse the membrane as a helical; Signal-anchor for type II membrane protein segment. At 431–452 (QAMETNQGNPFTNFLQDTKISN) the chain is on the lumenal side.

Belongs to the LEM family. In terms of assembly, interacts with LMNB1, LMNB2, BANF1, AKAP8L, GMCL and chromosomes. Mitosis-specific phosphorylation specifically abolishes its binding to lamin B and chromosomes.

It is found in the nucleus inner membrane. It localises to the chromosome. Binds directly to lamin B1 and chromosomes in a mitotic phosphorylation-regulated manner. May play an important role in nuclear envelope reassembly at the end of mitosis and/or anchoring of the nuclear lamina and interphase chromosomes to the nuclear envelope. The chain is Lamina-associated polypeptide 2, isoform beta (Tmpo) from Rattus norvegicus (Rat).